The primary structure comprises 155 residues: UPF0260 protein Smed_0627 (155 aa).

This sequence belongs to the UPF0260 family.

In Sinorhizobium medicae (strain WSM419) (Ensifer medicae), this protein is UPF0260 protein Smed_0627.